Consider the following 123-residue polypeptide: Large ribosomal subunit protein bL12 (123 aa).

The protein belongs to the bacterial ribosomal protein bL12 family. As to quaternary structure, homodimer. Part of the ribosomal stalk of the 50S ribosomal subunit. Forms a multimeric L10(L12)X complex, where L10 forms an elongated spine to which 2 to 4 L12 dimers bind in a sequential fashion. Binds GTP-bound translation factors.

Forms part of the ribosomal stalk which helps the ribosome interact with GTP-bound translation factors. Is thus essential for accurate translation. The sequence is that of Large ribosomal subunit protein bL12 from Chlorobium phaeovibrioides (strain DSM 265 / 1930) (Prosthecochloris vibrioformis (strain DSM 265)).